We begin with the raw amino-acid sequence, 438 residues long: Xanthine permease (438 aa).

The next 13 helical transmembrane spans lie at 11–31, 41–61, 65–85, 100–120, 121–141, 154–174, 180–200, 220–240, 272–292, 308–328, 331–351, 367–387, and 396–416; these read LGIQHVLAMYAGAIVVPLIVG, LTYLVSIDIFMCGVATLLQVW, FFGIGLPVVLGCTFTAVSPMI, IIASGILVILISFFFGKLVSF, FPPVVTGSVVTIIGITLMPVA, FGDLSNLALAFTVLSIIVLLY, FIKSVSILIGILIGTFIAYFM, FYFGAPSFHAAPIITMSIVAI, AEGLAVLLGGIFNAFPYTAFS, VIVVTGVILMAFGLFPKIAAF, IIPSAVLGGAMVAMFGMVIAY, LLIVACSVGLGLGVTVVPDIF, and LLTTNGIVAGSFTAVVLNIVY.

It belongs to the nucleobase:cation symporter-2 (NCS2) (TC 2.A.40) family.

It localises to the cell membrane. Transport of xanthine in the cell. The sequence is that of Xanthine permease (pbuX) from Bacillus subtilis (strain 168).